We begin with the raw amino-acid sequence, 344 residues long: Polyhomeotic-like protein 2 (344 aa).

The span at 1 to 23 (MTSGNGSSPVPTAATGNRTQNGE) shows a compositional bias: polar residues. The interval 1–28 (MTSGNGSSPVPTAATGNRTQNGENKPPQ) is disordered. Positions 25–53 (KPPQAVVKPQILTHFIEGFVIQEGAQPFP) match the HD1 motif. The segment at 114–148 (GDGDPPKLKCELCGRVDFEYKFKRSKRFCSMACAK) adopts an FCS-type zinc-finger fold. Zn(2+)-binding residues include Cys-123, Cys-126, Cys-142, and Cys-146. Residues 165–269 (RSKLQKPTVA…LHSRDPIAMS (105 aa)) form a disordered region. The span at 173 to 183 (VAKHARRRSRK) shows a compositional bias: basic residues. Positions 216–233 (KLSNSQEDSSRCSDNSSY) are enriched in polar residues. The segment covering 234–248 (EEPLSPMSASSSLSR) has biased composition (low complexity). An SAM domain is found at 280–344 (WNVEDVYDFV…YARISMLKDS (65 aa)).

Component of a PRC1-like complex.

The protein resides in the nucleus. In terms of biological role, component of a Polycomb group (PcG) multiprotein PRC1-like complex, a complex class required to maintain the transcriptionally repressive state of many genes, including Hox genes, throughout development. PcG PRC1 complex acts via chromatin remodeling and modification of histones; it mediates monoubiquitination of histone H2A 'Lys-119', rendering chromatin heritably changed in its expressibility. The sequence is that of Polyhomeotic-like protein 2 (phc2) from Xenopus laevis (African clawed frog).